The following is a 172-amino-acid chain: MTDAPNTPADNAAAQAPQLRVLAQYVKDLSFENPGAPETLRPGQQAPAIDLAIDVQARTAGEDTFEVVLTVNAKASRDESVVFIAELSYAGLFQLANVGETDREPFLLIECPRLIFPFARRVLADATRDGNFPPLMLDPVDFAGLYRAQLAKRAAAAPGSESNGNGDPAAAN.

It belongs to the SecB family. As to quaternary structure, homotetramer, a dimer of dimers. One homotetramer interacts with 1 SecA dimer.

It localises to the cytoplasm. Its function is as follows. One of the proteins required for the normal export of preproteins out of the cell cytoplasm. It is a molecular chaperone that binds to a subset of precursor proteins, maintaining them in a translocation-competent state. It also specifically binds to its receptor SecA. This is Protein-export protein SecB from Maricaulis maris (strain MCS10) (Caulobacter maris).